Reading from the N-terminus, the 128-residue chain is Glycine cleavage system H protein (128 aa).

One can recognise a Lipoyl-binding domain in the interval 25–107 (TFKVGITDHA…YEAGWLFTVR (83 aa)). Lys66 is subject to N6-lipoyllysine.

It belongs to the GcvH family. In terms of assembly, the glycine cleavage system is composed of four proteins: P, T, L and H. (R)-lipoate serves as cofactor.

Functionally, the glycine cleavage system catalyzes the degradation of glycine. The H protein shuttles the methylamine group of glycine from the P protein to the T protein. The chain is Glycine cleavage system H protein from Kocuria rhizophila (strain ATCC 9341 / DSM 348 / NBRC 103217 / DC2201).